A 238-amino-acid polypeptide reads, in one-letter code: Ribosomal RNA small subunit methyltransferase G (238 aa).

Residues glycine 77, phenylalanine 82, 128-129, and arginine 147 each bind S-adenosyl-L-methionine; that span reads AE.

This sequence belongs to the methyltransferase superfamily. RNA methyltransferase RsmG family.

The protein localises to the cytoplasm. Its function is as follows. Specifically methylates the N7 position of guanine in position 535 of 16S rRNA. The polypeptide is Ribosomal RNA small subunit methyltransferase G (Listeria innocua serovar 6a (strain ATCC BAA-680 / CLIP 11262)).